We begin with the raw amino-acid sequence, 368 residues long: Quinolinate synthase (368 aa).

Iminosuccinate-binding residues include His-46 and Ser-63. Cys-110 is a binding site for [4Fe-4S] cluster. Residues 141 to 143 and Ser-162 contribute to the iminosuccinate site; that span reads YVN. Cys-230 lines the [4Fe-4S] cluster pocket. Residues 256-258 and Thr-273 contribute to the iminosuccinate site; that span reads HPE. Cys-320 lines the [4Fe-4S] cluster pocket.

This sequence belongs to the quinolinate synthase family. Type 3 subfamily. It depends on [4Fe-4S] cluster as a cofactor.

It is found in the cytoplasm. It catalyses the reaction iminosuccinate + dihydroxyacetone phosphate = quinolinate + phosphate + 2 H2O + H(+). Its pathway is cofactor biosynthesis; NAD(+) biosynthesis; quinolinate from iminoaspartate: step 1/1. Functionally, catalyzes the condensation of iminoaspartate with dihydroxyacetone phosphate to form quinolinate. This is Quinolinate synthase from Bacillus mycoides (strain KBAB4) (Bacillus weihenstephanensis).